The chain runs to 992 residues: Probable RNA-dependent RNA polymerase 3 (992 aa).

A disordered region spans residues 88 to 113 (PRLSPGESPVQSPRTPAKKSCRASQD).

The protein belongs to the RdRP family.

It catalyses the reaction RNA(n) + a ribonucleoside 5'-triphosphate = RNA(n+1) + diphosphate. Its function is as follows. Probably involved in the RNA silencing pathway and required for the generation of small interfering RNAs (siRNAs). The protein is Probable RNA-dependent RNA polymerase 3 (RDR3) of Arabidopsis thaliana (Mouse-ear cress).